Here is an 841-residue protein sequence, read N- to C-terminus: Protein translocase subunit SecA (841 aa).

Residues 79-80, Q85, 103-107, and D492 each bind ATP; these read MF and GEGKT. Residues 786–813 are disordered; that stretch reads REEVVQGQTTAHQPQEGDDNKKAKKAPV. 4 residues coordinate Zn(2+): C825, C827, C836, and C837.

It belongs to the SecA family. As to quaternary structure, part of the essential Sec protein translocation apparatus which comprises SecA, SecYEG and auxiliary proteins SecDF. Other proteins may be involved. Monomer and many different homodimers can be isolated, some of which are not formed in the presence of a synthetic signal peptide. A single SecA monomer interacts with SecY in the channel. Only shows some colocalization with FloA or FloT membrane assemblies. Zn(2+) serves as cofactor.

The protein localises to the cell membrane. The protein resides in the cytoplasm. It localises to the membrane raft. It carries out the reaction ATP + H2O + cellular proteinSide 1 = ADP + phosphate + cellular proteinSide 2.. In terms of biological role, part of the Sec protein translocase complex. Interacts with the SecYEG preprotein conducting channel. Has a central role in coupling the hydrolysis of ATP to the transfer of proteins into and across the cell membrane, serving as an ATP-driven molecular motor driving the stepwise translocation of polypeptide chains across the membrane. The chain is Protein translocase subunit SecA from Bacillus subtilis (strain 168).